The chain runs to 182 residues: Isopentenyl-diphosphate Delta-isomerase (182 aa).

Residues His-25 and His-32 each coordinate Mn(2+). The region spanning 30–164 is the Nudix hydrolase domain; it reads LLHLAFSSWL…PWAFSPWMVM (135 aa). Cys-67 is a catalytic residue. His-69 is a Mn(2+) binding site. Residue Glu-87 participates in Mg(2+) binding. 2 residues coordinate Mn(2+): Glu-114 and Glu-116. Glu-116 is a catalytic residue.

It belongs to the IPP isomerase type 1 family. In terms of assembly, homodimer. Requires Mg(2+) as cofactor. It depends on Mn(2+) as a cofactor.

The protein resides in the cytoplasm. It carries out the reaction isopentenyl diphosphate = dimethylallyl diphosphate. It functions in the pathway isoprenoid biosynthesis; dimethylallyl diphosphate biosynthesis; dimethylallyl diphosphate from isopentenyl diphosphate: step 1/1. Catalyzes the 1,3-allylic rearrangement of the homoallylic substrate isopentenyl (IPP) to its highly electrophilic allylic isomer, dimethylallyl diphosphate (DMAPP). In Shigella boydii serotype 18 (strain CDC 3083-94 / BS512), this protein is Isopentenyl-diphosphate Delta-isomerase.